The following is a 217-amino-acid chain: Probable D-methionine transport system permease protein MetI (217 aa).

An ABC transmembrane type-1 domain is found at 13–207 (TLETLYMGFI…LIVMLSQKLG (195 aa)). Helical transmembrane passes span 20-40 (GFIATLFAIVIGLPIGLLAFL), 58-78 (VIINIGRSVPFIILLIILLPF), 81-101 (LVVGTTLGTTAAIVPLSVSAI), 143-163 (IPILINGITLTLVALIGYSAM), and 184-204 (NMIYVKWIATIIIVLIVMLSQ).

This sequence belongs to the binding-protein-dependent transport system permease family. CysTW subfamily.

It localises to the cell inner membrane. Functionally, part of the binding-protein-dependent transport system for D-methionine. Probably responsible for the translocation of the substrate across the membrane. The polypeptide is Probable D-methionine transport system permease protein MetI (metI) (Pasteurella multocida (strain Pm70)).